The following is a 339-amino-acid chain: NADPH dehydrogenase (339 aa).

Residue 21 to 24 (PPMC) participates in FMN binding. Tyrosine 26 serves as a coordination point for substrate. The FMN site is built by alanine 57 and glutamine 99. Substrate is bound at residue 162–165 (HGAH). FMN-binding positions include arginine 215 and 307–308 (GR).

Belongs to the NADH:flavin oxidoreductase/NADH oxidase family. NamA subfamily. As to quaternary structure, homotetramer. FMN serves as cofactor.

The enzyme catalyses A + NADPH + H(+) = AH2 + NADP(+). Catalyzes the reduction of the double bond of an array of alpha,beta-unsaturated aldehydes and ketones. It also reduces the nitro group of nitroester and nitroaromatic compounds. It could have a role in detoxification processes. This chain is NADPH dehydrogenase, found in Clostridium acetobutylicum (strain ATCC 824 / DSM 792 / JCM 1419 / IAM 19013 / LMG 5710 / NBRC 13948 / NRRL B-527 / VKM B-1787 / 2291 / W).